The following is a 409-amino-acid chain: Inactive serine protease 35 (409 aa).

Positions 1-17 are cleaved as a signal peptide; that stretch reads MLLWLIFFTPGWTLIDG. Asn87 and Asn107 each carry an N-linked (GlcNAc...) asparagine glycan. The region spanning 120–404 is the Peptidase S1 domain; that stretch reads VYGTDSRFSI…ICLWIHGNDA (285 aa). A disulfide bridge connects residues Cys150 and Cys166. Positions 188-203 are enriched in basic residues; it reads RNKSGGKKRRGSKRSR. Positions 188–246 are disordered; sequence RNKSGGKKRRGSKRSRRETSGGDQREGPREHLQDRVKAGRRRKQSGGGQRVSEGRPSFR. The segment covering 204-224 has biased composition (basic and acidic residues); that stretch reads RETSGGDQREGPREHLQDRVK.

Belongs to the peptidase S1 family.

Its subcellular location is the secreted. This chain is Inactive serine protease 35 (PRSS35), found in Macaca mulatta (Rhesus macaque).